A 567-amino-acid chain; its full sequence is Proline--tRNA ligase (567 aa).

This sequence belongs to the class-II aminoacyl-tRNA synthetase family. ProS type 1 subfamily. As to quaternary structure, homodimer.

The protein localises to the cytoplasm. The enzyme catalyses tRNA(Pro) + L-proline + ATP = L-prolyl-tRNA(Pro) + AMP + diphosphate. Functionally, catalyzes the attachment of proline to tRNA(Pro) in a two-step reaction: proline is first activated by ATP to form Pro-AMP and then transferred to the acceptor end of tRNA(Pro). As ProRS can inadvertently accommodate and process non-cognate amino acids such as alanine and cysteine, to avoid such errors it has two additional distinct editing activities against alanine. One activity is designated as 'pretransfer' editing and involves the tRNA(Pro)-independent hydrolysis of activated Ala-AMP. The other activity is designated 'posttransfer' editing and involves deacylation of mischarged Ala-tRNA(Pro). The misacylated Cys-tRNA(Pro) is not edited by ProRS. This is Proline--tRNA ligase from Streptomyces griseus subsp. griseus (strain JCM 4626 / CBS 651.72 / NBRC 13350 / KCC S-0626 / ISP 5235).